The following is a 500-amino-acid chain: NAD(P)H-quinone oxidoreductase subunit 2 B, chloroplastic (500 aa).

The next 13 helical transmembrane spans lie at 14–34 (SILP…IDLT), 41–61 (WLYF…LFQL), 78–98 (FNGI…PLSM), 116–136 (LTAT…IIFI), 166–186 (LLMG…LYGL), 211–231 (ISIV…LVPF), 242–262 (APTS…LALA), 277–297 (WHLI…FIAI), 305–325 (MLAY…IAGD), 335–355 (YMLF…LFGL), 376–396 (ASFL…AGFF), 409–429 (GLYL…YYYL), and 467–487 (IIIC…VIAI).

It belongs to the complex I subunit 2 family. NDH is composed of at least 16 different subunits, 5 of which are encoded in the nucleus.

Its subcellular location is the plastid. It localises to the chloroplast thylakoid membrane. It catalyses the reaction a plastoquinone + NADH + (n+1) H(+)(in) = a plastoquinol + NAD(+) + n H(+)(out). It carries out the reaction a plastoquinone + NADPH + (n+1) H(+)(in) = a plastoquinol + NADP(+) + n H(+)(out). NDH shuttles electrons from NAD(P)H:plastoquinone, via FMN and iron-sulfur (Fe-S) centers, to quinones in the photosynthetic chain and possibly in a chloroplast respiratory chain. The immediate electron acceptor for the enzyme in this species is believed to be plastoquinone. Couples the redox reaction to proton translocation, and thus conserves the redox energy in a proton gradient. This Anthoceros angustus (Hornwort) protein is NAD(P)H-quinone oxidoreductase subunit 2 B, chloroplastic.